The sequence spans 360 residues: Chorismate synthase (360 aa).

Residues 36-60 form a disordered region; the sequence is LSEDDIQPDLDRRKPGTSKYTTPRR. Arginine 48 is an NADP(+) binding site. Residues 125–127, 246–247, glycine 286, 301–305, and arginine 327 contribute to the FMN site; these read RSS, NA, and KPTSS.

It belongs to the chorismate synthase family. As to quaternary structure, homotetramer. It depends on FMNH2 as a cofactor.

The enzyme catalyses 5-O-(1-carboxyvinyl)-3-phosphoshikimate = chorismate + phosphate. The protein operates within metabolic intermediate biosynthesis; chorismate biosynthesis; chorismate from D-erythrose 4-phosphate and phosphoenolpyruvate: step 7/7. In terms of biological role, catalyzes the anti-1,4-elimination of the C-3 phosphate and the C-6 proR hydrogen from 5-enolpyruvylshikimate-3-phosphate (EPSP) to yield chorismate, which is the branch point compound that serves as the starting substrate for the three terminal pathways of aromatic amino acid biosynthesis. This reaction introduces a second double bond into the aromatic ring system. This is Chorismate synthase from Histophilus somni (strain 129Pt) (Haemophilus somnus).